A 210-amino-acid chain; its full sequence is Redox-sensing transcriptional repressor Rex (210 aa).

The segment at residues 17-56 is a DNA-binding region (H-T-H motif); that stretch reads KYHRYLGDLLDRDIQRISSKELSDIIGFTASQIRQDLNNF. NAD(+) is bound at residue 91–96; the sequence is GAGNLG.

The protein belongs to the transcriptional regulatory Rex family. Homodimer.

The protein localises to the cytoplasm. Its function is as follows. Modulates transcription in response to changes in cellular NADH/NAD(+) redox state. The sequence is that of Redox-sensing transcriptional repressor Rex from Clostridioides difficile (strain 630) (Peptoclostridium difficile).